Here is a 153-residue protein sequence, read N- to C-terminus: 6,7-dimethyl-8-ribityllumazine synthase (153 aa).

Residues Phe22, 56-58, and 80-82 each bind 5-amino-6-(D-ribitylamino)uracil; these read AFE and AVI. 85 to 86 lines the (2S)-2-hydroxy-3-oxobutyl phosphate pocket; that stretch reads AT. The active-site Proton donor is His88. Phe113 provides a ligand contact to 5-amino-6-(D-ribitylamino)uracil. Residue Arg127 coordinates (2S)-2-hydroxy-3-oxobutyl phosphate.

This sequence belongs to the DMRL synthase family.

It carries out the reaction (2S)-2-hydroxy-3-oxobutyl phosphate + 5-amino-6-(D-ribitylamino)uracil = 6,7-dimethyl-8-(1-D-ribityl)lumazine + phosphate + 2 H2O + H(+). Its pathway is cofactor biosynthesis; riboflavin biosynthesis; riboflavin from 2-hydroxy-3-oxobutyl phosphate and 5-amino-6-(D-ribitylamino)uracil: step 1/2. Functionally, catalyzes the formation of 6,7-dimethyl-8-ribityllumazine by condensation of 5-amino-6-(D-ribitylamino)uracil with 3,4-dihydroxy-2-butanone 4-phosphate. This is the penultimate step in the biosynthesis of riboflavin. The protein is 6,7-dimethyl-8-ribityllumazine synthase of Alkaliphilus metalliredigens (strain QYMF).